Consider the following 95-residue polypeptide: Co-chaperonin GroES (95 aa).

This sequence belongs to the GroES chaperonin family. In terms of assembly, heptamer of 7 subunits arranged in a ring. Interacts with the chaperonin GroEL.

It localises to the cytoplasm. Functionally, together with the chaperonin GroEL, plays an essential role in assisting protein folding. The GroEL-GroES system forms a nano-cage that allows encapsulation of the non-native substrate proteins and provides a physical environment optimized to promote and accelerate protein folding. GroES binds to the apical surface of the GroEL ring, thereby capping the opening of the GroEL channel. The protein is Co-chaperonin GroES of Streptococcus uberis (strain ATCC BAA-854 / 0140J).